A 336-amino-acid chain; its full sequence is Methionyl-tRNA formyltransferase (336 aa).

Residue 110–113 (SLLP) coordinates (6S)-5,6,7,8-tetrahydrofolate.

The protein belongs to the Fmt family.

The enzyme catalyses L-methionyl-tRNA(fMet) + (6R)-10-formyltetrahydrofolate = N-formyl-L-methionyl-tRNA(fMet) + (6S)-5,6,7,8-tetrahydrofolate + H(+). Functionally, attaches a formyl group to the free amino group of methionyl-tRNA(fMet). The formyl group appears to play a dual role in the initiator identity of N-formylmethionyl-tRNA by promoting its recognition by IF2 and preventing the misappropriation of this tRNA by the elongation apparatus. The sequence is that of Methionyl-tRNA formyltransferase from Prochlorococcus marinus (strain NATL2A).